The primary structure comprises 473 residues: MSNHDPLTLKLSLREKCAYGVGDFGSNLMLCIGTLYLLKFYTDELGMPAYYGGIIFLVAKFFTAFTDMLTGVLLDSRRNIGAKGKFRPFILYASFPVALVATAQFFATHFTLPVKTAFATVLFMLFGLFYSLMNCSYGAMVPAITKNPHERAQLAAWRQGGATIGLLLCTVGFMPIQALFTRSPSLGYLIAAVIFSVCGLFSMWWCFSGVKERYIETVPDTHKPSILKSFCAIFRNPPLLVLCVANLCTLAAFNIKLAIQVYYTQYVLNDIHLLSWMGFFSMGCILIGVLLVPAAVKRFGKKQVYLGGLILWAVGDILNFIWGGTSFLFVIFSCIAFFGTAFVNSLNWALVPDTVDYGEWKTGIRAEGSVYTGYTFSRKISAALAGFLPGIMLTQIGYIPNIAQSDTTLLGLRQLIFLWPCGLAIIAALTMGFFYKLNEQRFAFIIEEIAQRKKTGNQIVATNNKQSISTVNN.

11 helical membrane-spanning segments follow: residues 18–38, 45–65, 88–108, 110–130, 160–180, 187–207, 239–259, 276–296, 317–337, 380–400, and 415–435; these read AYGV…LYLL, LGMP…FTAF, PFIL…FFAT, FTLP…GLFY, GGAT…QALF, GYLI…WWCF, LLVL…KLAI, WMGF…PAAV, ILNF…CIAF, ISAA…GYIP, and LIFL…GFFY.

Belongs to the sodium:galactoside symporter (TC 2.A.2) family.

The protein localises to the cell inner membrane. Functionally, could be involved in sulfoquinovose import. This is Putative sulfoquinovose importer (yihO) from Salmonella typhimurium (strain LT2 / SGSC1412 / ATCC 700720).